A 356-amino-acid polypeptide reads, in one-letter code: Nitrilase, arylacetone-specific (356 aa).

The region spanning 7–280 is the CN hydrolase domain; sequence VRAAAVQAAS…EGLIIADLNM (274 aa). Catalysis depends on E47, which acts as the Proton acceptor. K129 serves as the catalytic Proton donor. C163 (nucleophile) is an active-site residue. Residues 324–356 are disordered; it reads QEEAPEPHVQSTAAPVAVSQTQDSDTLLVQEPS. A compositionally biased stretch (polar residues) spans 332-356; the sequence is VQSTAAPVAVSQTQDSDTLLVQEPS.

The protein belongs to the carbon-nitrogen hydrolase superfamily. Nitrilase family. In terms of assembly, homohexamer.

It carries out the reaction a nitrile + 2 H2O = a carboxylate + NH4(+). In terms of biological role, nitrilase that acts mostly on arylacetonitriles. The polypeptide is Nitrilase, arylacetone-specific (Alcaligenes faecalis).